We begin with the raw amino-acid sequence, 492 residues long: 2,3-bisphosphoglycerate-independent phosphoglycerate mutase (492 aa).

Positions 11 and 61 each coordinate Mn(2+). Ser-61 functions as the Phosphoserine intermediate in the catalytic mechanism. Substrate is bound by residues His-118, 147–148 (RD), Arg-178, Arg-184, 248–251 (RNDR), and Lys-320. Asp-386, His-390, Asp-427, His-428, and His-445 together coordinate Mn(2+).

The protein belongs to the BPG-independent phosphoglycerate mutase family. In terms of assembly, monomer. Mn(2+) is required as a cofactor.

The enzyme catalyses (2R)-2-phosphoglycerate = (2R)-3-phosphoglycerate. The protein operates within carbohydrate degradation; glycolysis; pyruvate from D-glyceraldehyde 3-phosphate: step 3/5. In terms of biological role, catalyzes the interconversion of 2-phosphoglycerate and 3-phosphoglycerate. The polypeptide is 2,3-bisphosphoglycerate-independent phosphoglycerate mutase (Campylobacter jejuni (strain RM1221)).